A 285-amino-acid polypeptide reads, in one-letter code: Hypersensitive-induced response protein 3 (285 aa).

The N-myristoyl glycine moiety is linked to residue Gly-2. Coiled coils occupy residues 113-139 (NLDD…MTAY) and 165-185 (NAAA…KIIQ).

As to quaternary structure, self-interacts and forms heteromers. Interacts with NB-LRR class of R proteins before R proteins (e.g. RPS2 or RPM1) are activated by the effectors.

It localises to the cell membrane. In Arabidopsis thaliana (Mouse-ear cress), this protein is Hypersensitive-induced response protein 3 (HIR3).